The sequence spans 881 residues: Sodium/potassium/calcium exchanger Nckx30C (881 aa).

Residues 1–194 (MLQPTTCSKQ…SRCRSRRCLR (194 aa)) are Extracellular-facing. N-linked (GlcNAc...) asparagine glycosylation is present at Asn69. 4 disordered regions span residues 79–111 (DMLS…APSD), 149–181 (AKTR…LLHP), 215–255 (AAKP…TSGE), and 272–315 (GLEE…TTKT). Polar residues predominate over residues 85 to 95 (RSRSSSTTIDF). Positions 149–175 (AKTRSRTAAQLPATSAASATSSRGASA) are enriched in low complexity. Residues 195 to 215 (LPIYSILLLCLTTQGLGLGDA) form a helical membrane-spanning segment. The Cytoplasmic portion of the chain corresponds to 216 to 330 (AKPRPAKQHF…DLFTKEQLEN (115 aa)). Residues 228–240 (SNSNSPNQNQNHN) are compositionally biased toward low complexity. Positions 296-315 (AGNQRGINDTHNDNSTTTKT) are enriched in polar residues. The helical transmembrane segment at 331–351 (GAVILHIIGVIYMFVALAIVC) threads the bilayer. At 352–375 (DEFFVPSLDVIIEKLGITDDVAGA) the chain is on the extracellular side. The Alpha-1 repeat unit spans residues 372 to 412 (VAGATFMAAGGSAPELFTSVIGVFVSFDDVGIGTIVGSAVF). The chain crosses the membrane as a helical span at residues 376–396 (TFMAAGGSAPELFTSVIGVFV). Topologically, residues 397–402 (SFDDVG) are cytoplasmic. A helical transmembrane segment spans residues 403 to 423 (IGTIVGSAVFNILFVIGMCAL). Over 424–433 (FSKTVLSLTW) the chain is Extracellular. A helical transmembrane segment spans residues 434 to 454 (WPLFRDCSFYSISLLVLIYFF). Over 455-458 (RDNR) the chain is Cytoplasmic. The helical transmembrane segment at 459 to 479 (IFWWEALILFTIYIGYVAFMK) threads the bilayer. At 480-720 (WNVQVETCVK…PDTRTPRGKR (241 aa)) the chain is on the extracellular side. The interval 508–565 (PAGNAANSSETSMATQPGGSVTSRAASETRSGPPGSSNAGATGNSSGGGGTSGSTQTG) is disordered. Residues 512–537 (AANSSETSMATQPGGSVTSRAASETR) are compositionally biased toward polar residues. 2 N-linked (GlcNAc...) asparagine glycosylation sites follow: Asn514 and Asn551. The segment covering 542-551 (GSSNAGATGN) has biased composition (low complexity). A helical transmembrane segment spans residues 721–741 (FFPVTFIGSIVWIAAFSYLMV). Residues 742-756 (WWANVAGDTARIPPE) are Cytoplasmic-facing. Residues 757–777 (VMGLTFLAAGTSIPDLITSVI) form a helical membrane-spanning segment. An Alpha-2 repeat occupies 764-795 (AAGTSIPDLITSVIVARKGFGDMAVSSSVGSN). The Extracellular portion of the chain corresponds to 778–795 (VARKGFGDMAVSSSVGSN). A helical transmembrane segment spans residues 796–816 (IFDVTVGLPIPWLLYGIIYGA). Over 817–822 (PVEVNS) the chain is Cytoplasmic. The chain crosses the membrane as a helical span at residues 823–843 (VGMVCSITILFMMLVFVVMSI). The Extracellular portion of the chain corresponds to 844–852 (ACFRWRMNK). The helical transmembrane segment at 853 to 873 (GLGFTMFLLYFAFVAVSLMFE) threads the bilayer. Over 874–881 (YDVITCPF) the chain is Cytoplasmic.

It belongs to the Ca(2+):cation antiporter (CaCA) (TC 2.A.19) family. SLC24A subfamily. As to expression, expressed in the adult nervous system. Expressed in the photoreceptor cells as well as in the lamina, medulla, and optic lobes of the brain.

The protein resides in the membrane. Functionally, may function in the removal and maintenance of calcium homeostasis during signaling in the adult and in signaling events during embryogenesis and patterning of imaginal disks. Transports one Ca(2+) and 1 K(+) in exchange for 4 Na(+). In Drosophila melanogaster (Fruit fly), this protein is Sodium/potassium/calcium exchanger Nckx30C (Nckx30C).